Reading from the N-terminus, the 337-residue chain is HTH-type transcriptional repressor PurR (337 aa).

An HTH lacI-type domain is found at 2–56 (ATIKDVAKLAAVSTTTVSHVINKTRFVAEATQKRVWEAVEELNYAPSAVARSLKC). Positions 4–23 (IKDVAKLAAVSTTTVSHVIN) form a DNA-binding region, H-T-H motif. Residues 48-56 (SAVARSLKC) mediate DNA binding. The hypoxanthine site is built by Phe-73, Lys-189, Thr-191, Phe-220, and Asp-276.

As to quaternary structure, homodimer.

The protein operates within purine metabolism; purine nucleotide biosynthesis [regulation]. Is the main repressor of the genes involved in the de novo synthesis of purine nucleotides, regulating purB, purC, purEK, purF, purHD, purL, purMN and guaBA expression. PurR is allosterically activated to bind its cognate DNA by binding the purine corepressors, hypoxanthine or guanine, thereby effecting transcription repression. This chain is HTH-type transcriptional repressor PurR, found in Aliivibrio fischeri (strain ATCC 700601 / ES114) (Vibrio fischeri).